We begin with the raw amino-acid sequence, 171 residues long: S-ribosylhomocysteine lyase (171 aa).

Residues histidine 54, histidine 58, and cysteine 128 each contribute to the Fe cation site.

Belongs to the LuxS family. Homodimer. It depends on Fe cation as a cofactor.

It catalyses the reaction S-(5-deoxy-D-ribos-5-yl)-L-homocysteine = (S)-4,5-dihydroxypentane-2,3-dione + L-homocysteine. Its function is as follows. Involved in the synthesis of autoinducer 2 (AI-2) which is secreted by bacteria and is used to communicate both the cell density and the metabolic potential of the environment. The regulation of gene expression in response to changes in cell density is called quorum sensing. Catalyzes the transformation of S-ribosylhomocysteine (RHC) to homocysteine (HC) and 4,5-dihydroxy-2,3-pentadione (DPD). The sequence is that of S-ribosylhomocysteine lyase from Escherichia fergusonii (strain ATCC 35469 / DSM 13698 / CCUG 18766 / IAM 14443 / JCM 21226 / LMG 7866 / NBRC 102419 / NCTC 12128 / CDC 0568-73).